Consider the following 240-residue polypeptide: Chloroplastic group IIB intron splicing facilitator CRS2-B, chloroplastic (240 aa).

It belongs to the PTH family. CRS2 subfamily. In terms of assembly, part of large ribonucleo-protein complexes that include group IIB introns and either CAF1 or CAF2.

It localises to the plastid. The protein resides in the chloroplast stroma. Its function is as follows. Required for the splicing of group IIB introns in chloroplasts. The sequence is that of Chloroplastic group IIB intron splicing facilitator CRS2-B, chloroplastic (CRS2B) from Arabidopsis thaliana (Mouse-ear cress).